A 357-amino-acid polypeptide reads, in one-letter code: 3-dehydroquinate synthase (357 aa).

NAD(+) is bound by residues 104–108 (GVVGD), 128–129 (TT), Lys-141, and 168–171 (FLET). Residues Glu-183, His-243, and His-260 each contribute to the Zn(2+) site.

It belongs to the sugar phosphate cyclases superfamily. Dehydroquinate synthase family. NAD(+) serves as cofactor. The cofactor is Co(2+). Requires Zn(2+) as cofactor.

The protein resides in the cytoplasm. It carries out the reaction 7-phospho-2-dehydro-3-deoxy-D-arabino-heptonate = 3-dehydroquinate + phosphate. It functions in the pathway metabolic intermediate biosynthesis; chorismate biosynthesis; chorismate from D-erythrose 4-phosphate and phosphoenolpyruvate: step 2/7. Its function is as follows. Catalyzes the conversion of 3-deoxy-D-arabino-heptulosonate 7-phosphate (DAHP) to dehydroquinate (DHQ). The protein is 3-dehydroquinate synthase of Streptococcus pyogenes serotype M3 (strain ATCC BAA-595 / MGAS315).